The chain runs to 239 residues: Purine nucleoside phosphorylase DeoD-type 1 (239 aa).

Position 5 (H5) interacts with a purine D-ribonucleoside. Phosphate is bound by residues G21, R25, R44, and 88 to 91; that span reads RVGS. Residues 180–182 and 204–205 each bind a purine D-ribonucleoside; these read EME and SD. D205 acts as the Proton donor in catalysis.

It belongs to the PNP/UDP phosphorylase family. Homohexamer; trimer of homodimers.

The catalysed reaction is a purine D-ribonucleoside + phosphate = a purine nucleobase + alpha-D-ribose 1-phosphate. It carries out the reaction a purine 2'-deoxy-D-ribonucleoside + phosphate = a purine nucleobase + 2-deoxy-alpha-D-ribose 1-phosphate. Its function is as follows. Catalyzes the reversible phosphorolytic breakdown of the N-glycosidic bond in the beta-(deoxy)ribonucleoside molecules, with the formation of the corresponding free purine bases and pentose-1-phosphate. The polypeptide is Purine nucleoside phosphorylase DeoD-type 1 (Vibrio vulnificus (strain CMCP6)).